Consider the following 220-residue polypeptide: UPF0319 protein Asuc_1002 (220 aa).

An N-terminal signal peptide occupies residues 1 to 21; sequence MKFRLAAVAAAALLASSASFA.

The protein belongs to the UPF0319 family.

The chain is UPF0319 protein Asuc_1002 from Actinobacillus succinogenes (strain ATCC 55618 / DSM 22257 / CCUG 43843 / 130Z).